A 937-amino-acid polypeptide reads, in one-letter code: Molybdenum cofactor sulfurase (937 aa).

Residue Lys-237 is modified to N6-(pyridoxal phosphate)lysine. Cys-397 is a catalytic residue. 3 disordered regions span residues 633-710, 756-795, and 897-921; these read GQGK…RRIL, PSPS…KLNP, and KEGT…GGNG. The span at 638 to 652 shows a compositional bias: basic residues; that stretch reads MTRHAKAHLQRHQHQ. The MOSC domain maps to 682-935; that stretch reads TPPSPPDSDT…VRVGDVVRPS (254 aa). Residues 756 to 767 show a composition bias toward low complexity; the sequence is PSPSTPSASPSN. The segment covering 900-921 has biased composition (gly residues); that stretch reads TGMGMGTGTGTGTGTRSMGGNG.

The protein belongs to the class-V pyridoxal-phosphate-dependent aminotransferase family. MOCOS subfamily. Pyridoxal 5'-phosphate is required as a cofactor.

It carries out the reaction Mo-molybdopterin + L-cysteine + AH2 = thio-Mo-molybdopterin + L-alanine + A + H2O. It functions in the pathway cofactor biosynthesis; molybdopterin biosynthesis. Functionally, sulfurates the molybdenum cofactor. Sulfation of molybdenum is essential for xanthine dehydrogenase (XDH) and aldehyde oxidase (ADO) enzymes in which molybdenum cofactor is liganded by 1 oxygen and 1 sulfur atom in active form. The protein is Molybdenum cofactor sulfurase (nit-13) of Neurospora crassa (strain ATCC 24698 / 74-OR23-1A / CBS 708.71 / DSM 1257 / FGSC 987).